We begin with the raw amino-acid sequence, 160 residues long: MEAERPQEEEDGEQGPPQDEEGWPPPNSTTRPWRSAPPSPPPPGTRHTALGPRSASLLSLQTELLLDLVAEAQSRRLEEQRATFYTPQNPSSLAPAPLRPLEDREQLYSTILSHQCQRMEAQRSEPPLPPGGQELLELLLRVQGGGRMEEQRSRPPTHTC.

A disordered region spans residues 1-55 (MEAERPQEEEDGEQGPPQDEEGWPPPNSTTRPWRSAPPSPPPPGTRHTALGPRSA). The span at 7 to 22 (QEEEDGEQGPPQDEEG) shows a compositional bias: acidic residues. Phosphoserine is present on residues Ser35, Ser39, Ser56, and Ser59. Pro residues predominate over residues 35-44 (SAPPSPPPPG). Position 62 is a phosphothreonine (Thr62). 3 consecutive GoLoco domains span residues 62–84 (TELLLDLVAEAQSRRLEEQRATF), 104–126 (REQLYSTILSHQCQRMEAQRSEP), and 132–155 (GQELLELLLRVQGGGRMEEQRSRP).

In terms of tissue distribution, expressed in heart, placenta, lung and liver.

The protein resides in the cytoplasm. Interacts with subunit of G(i) alpha proteins and regulates the activation of G(i) alpha proteins. The sequence is that of G-protein-signaling modulator 3 (GPSM3) from Homo sapiens (Human).